The following is a 270-amino-acid chain: Monocyte to macrophage differentiation factor 2 (270 aa).

The Cytoplasmic portion of the chain corresponds to 1-38; the sequence is MFAPRLLDFQKTKYARFMNHRVPAHKRYQPTEYEHAAN. Residues 39–59 traverse the membrane as a helical segment; sequence CATHAFWIIPSILGSSNLYFL. The Lumenal portion of the chain corresponds to 60 to 65; that stretch reads SDDDWE. Residues 66 to 86 traverse the membrane as a helical segment; sequence TISAWIYGLGLCGLFVVSTVF. Residues 87-102 are Cytoplasmic-facing; the sequence is HTISWKKSHLRMVEHC. A helical transmembrane segment spans residues 103 to 123; the sequence is LHMFDRMVIYFFIAASYAPWL. At 124-132 the chain is on the lumenal side; the sequence is NLRELGPWA. A helical membrane pass occupies residues 133 to 153; sequence SHMRWLVWIMASVGTIYVFFF. Residues 154 to 182 lie on the Cytoplasmic side of the membrane; sequence HERTGSCVQFLRGEACPKAGTACLPARYK. The chain crosses the membrane as a helical span at residues 183 to 203; that stretch reads LVELLCYVVMGFFPALVILSM. Topologically, residues 204 to 205 are lumenal; the sequence is PN. The helical transmembrane segment at 206-226 threads the bilayer; that stretch reads TEGIWELVTGGVFYCLGMVFF. The Cytoplasmic portion of the chain corresponds to 227–233; the sequence is KSDGRIP. A helical transmembrane segment spans residues 234 to 254; sequence FAHAIWHLFVAFGAGTHYYAI. At 255 to 270 the chain is on the lumenal side; sequence WRYLYLPSTLQTKVSK.

This sequence belongs to the ADIPOR family. Shows restricted expression with highest levels in brain and testis.

The protein localises to the golgi apparatus membrane. This chain is Monocyte to macrophage differentiation factor 2, found in Homo sapiens (Human).